The primary structure comprises 117 residues: Small ribosomal subunit protein bS6 (117 aa).

Belongs to the bacterial ribosomal protein bS6 family.

Its function is as follows. Binds together with bS18 to 16S ribosomal RNA. The chain is Small ribosomal subunit protein bS6 from Roseobacter denitrificans (strain ATCC 33942 / OCh 114) (Erythrobacter sp. (strain OCh 114)).